A 210-amino-acid polypeptide reads, in one-letter code: Thymidylate kinase (210 aa).

Position 11-18 (11-18 (GVDGSGKS)) interacts with ATP.

It belongs to the thymidylate kinase family.

It catalyses the reaction dTMP + ATP = dTDP + ADP. Its function is as follows. Phosphorylation of dTMP to form dTDP in both de novo and salvage pathways of dTTP synthesis. The polypeptide is Thymidylate kinase (Mycoplasmoides gallisepticum (strain R(low / passage 15 / clone 2)) (Mycoplasma gallisepticum)).